The chain runs to 109 residues: Peptide chaperone MftB (109 aa).

This sequence belongs to the peptide chaperone MftB family. In terms of assembly, interacts with MftA and MftC.

Peptide chaperone involved in the biosynthesis of the enzyme cofactor mycofactocin (MFT). Binds MftA and MftC with high affinity, and is essential for MftC activity on MftA, likely via the formation of a ternary complex. The sequence is that of Peptide chaperone MftB from Mycobacterium ulcerans (strain Agy99).